Here is a 125-residue protein sequence, read N- to C-terminus: Photoactive yellow protein (125 aa).

A PAS domain is found at 23–86 (IDDLAFGAIQ…GRFREGVANG (64 aa)). Cys69 is subject to S-(4-hydroxycinnamyl)cysteine.

It belongs to the photoactive yellow protein family. In terms of processing, the 4-hydroxycinnamic acid (p-coumaric acid) chromophore is covalently bound via a thioester linkage.

Its function is as follows. This photoactive protein is a photoreceptor with kinetics similar to that of rhodopsin. This chain is Photoactive yellow protein (pyp), found in Rhodothalassium salexigens (Rhodospirillum salexigens).